The primary structure comprises 66 residues: Cysteine proteinase inhibitor (66 aa).

The Secondary area of contact signature appears at 18 to 22; that stretch reads QVVAG.

The protein belongs to the cystatin family. Phytocystatin subfamily. As to expression, in tubers of untreated plants. After ABA treatment or mechanical wounding is mostly accumulated in leaves, to a lesser extent in stems, but not in roots.

This is Cysteine proteinase inhibitor (CYS-PIN) from Solanum tuberosum (Potato).